Reading from the N-terminus, the 331-residue chain is Ketol-acid reductoisomerase (NADP(+)) (331 aa).

Positions 2–182 (IKKYYDADCN…GAGRAGILET (181 aa)) constitute a KARI N-terminal Rossmann domain. NADP(+) is bound by residues 25 to 28 (YGSQ), arginine 48, and serine 51. Histidine 108 is a catalytic residue. An NADP(+)-binding site is contributed by glycine 134. Residues 183 to 329 (TFREETETDL…AELRKMMSWI (147 aa)) enclose the KARI C-terminal knotted domain. 4 residues coordinate Mg(2+): aspartate 191, glutamate 195, glutamate 227, and glutamate 231. Serine 252 serves as a coordination point for substrate.

This sequence belongs to the ketol-acid reductoisomerase family. The cofactor is Mg(2+).

The enzyme catalyses (2R)-2,3-dihydroxy-3-methylbutanoate + NADP(+) = (2S)-2-acetolactate + NADPH + H(+). It catalyses the reaction (2R,3R)-2,3-dihydroxy-3-methylpentanoate + NADP(+) = (S)-2-ethyl-2-hydroxy-3-oxobutanoate + NADPH + H(+). It functions in the pathway amino-acid biosynthesis; L-isoleucine biosynthesis; L-isoleucine from 2-oxobutanoate: step 2/4. Its pathway is amino-acid biosynthesis; L-valine biosynthesis; L-valine from pyruvate: step 2/4. Involved in the biosynthesis of branched-chain amino acids (BCAA). Catalyzes an alkyl-migration followed by a ketol-acid reduction of (S)-2-acetolactate (S2AL) to yield (R)-2,3-dihydroxy-isovalerate. In the isomerase reaction, S2AL is rearranged via a Mg-dependent methyl migration to produce 3-hydroxy-3-methyl-2-ketobutyrate (HMKB). In the reductase reaction, this 2-ketoacid undergoes a metal-dependent reduction by NADPH to yield (R)-2,3-dihydroxy-isovalerate. The sequence is that of Ketol-acid reductoisomerase (NADP(+)) from Brachyspira hyodysenteriae (strain ATCC 49526 / WA1).